Consider the following 591-residue polypeptide: V-type ATP synthase alpha chain (591 aa).

Position 233 to 240 (233 to 240 (GPFGAGKT)) interacts with ATP.

Belongs to the ATPase alpha/beta chains family.

The enzyme catalyses ATP + H2O + 4 H(+)(in) = ADP + phosphate + 5 H(+)(out). Produces ATP from ADP in the presence of a proton gradient across the membrane. The V-type alpha chain is a catalytic subunit. The polypeptide is V-type ATP synthase alpha chain (Streptococcus pyogenes serotype M18 (strain MGAS8232)).